A 312-amino-acid polypeptide reads, in one-letter code: DNA primase small subunit PriS (312 aa).

Active-site residues include Asp88, Asp90, and Asp215.

This sequence belongs to the eukaryotic-type primase small subunit family. In terms of assembly, heterodimer of a small subunit (PriS) and a large subunit (PriL). It depends on Mg(2+) as a cofactor. Mn(2+) serves as cofactor.

Its function is as follows. Catalytic subunit of DNA primase, an RNA polymerase that catalyzes the synthesis of short RNA molecules used as primers for DNA polymerase during DNA replication. The small subunit contains the primase catalytic core and has DNA synthesis activity on its own. Binding to the large subunit stabilizes and modulates the activity, increasing the rate of DNA synthesis while decreasing the length of the DNA fragments, and conferring RNA synthesis capability. The DNA polymerase activity may enable DNA primase to also catalyze primer extension after primer synthesis. May also play a role in DNA repair. The polypeptide is DNA primase small subunit PriS (Pyrobaculum arsenaticum (strain DSM 13514 / JCM 11321 / PZ6)).